The sequence spans 565 residues: Tetratricopeptide repeat protein 39A (565 aa).

TPR repeat units lie at residues 271–304, 461–494, and 502–535; these read AIFL…QQVW, CLIQ…EKKL, and PNAL…YKVY.

This sequence belongs to the TTC39 family.

The polypeptide is Tetratricopeptide repeat protein 39A (ttc39a) (Danio rerio (Zebrafish)).